Consider the following 303-residue polypeptide: N-acetyl-D-glucosamine kinase (303 aa).

Residues 4–11 (GFDVGGTK) and 133–140 (GFGGGLVF) each bind ATP. Positions 157, 177, 179, and 184 each coordinate Zn(2+).

The protein belongs to the ROK (NagC/XylR) family. NagK subfamily.

It catalyses the reaction N-acetyl-D-glucosamine + ATP = N-acetyl-D-glucosamine 6-phosphate + ADP + H(+). Its pathway is cell wall biogenesis; peptidoglycan recycling. Functionally, catalyzes the phosphorylation of N-acetyl-D-glucosamine (GlcNAc) derived from cell-wall degradation, yielding GlcNAc-6-P. The chain is N-acetyl-D-glucosamine kinase from Photobacterium profundum (strain SS9).